The sequence spans 75 residues: Caerin 1.11 (75 aa).

The signal sequence occupies residues 1–22 (MASLKKSLFLVLFLGFVSVSIC). Positions 23–49 (EEEKRQEDEDEHEEEGENQEEGSEEKR) are excised as a propeptide. The tract at residues 24–48 (EEKRQEDEDEHEEEGENQEEGSEEK) is disordered. Positions 30–45 (DEDEHEEEGENQEEGS) are enriched in acidic residues. The residue at position 74 (L74) is a Leucine amide.

It belongs to the frog skin active peptide (FSAP) family. Caerin subfamily. Expressed by the skin glands.

Its subcellular location is the secreted. It is found in the target cell membrane. Cationic amphipathic alpha-helical antimicrobial peptide with weak or no activity against both Gram-positive and Gram-negative bacteria. Is weakly active against E.coli (MIC=25 uM), E.cloacae (MIC=50 uM), K.pneumoniae (MIC=25 uM), and S.haemolyticus (MIC=50 uM). Has no activity against S.typhimurium, S.enteritidis, B.megaterium, and S.aureus (MIC&gt;100 uM). This is Caerin 1.11 from Ranoidea caerulea (Green tree frog).